Reading from the N-terminus, the 558-residue chain is Dihydroxy-acid dehydratase (558 aa).

Asp81 provides a ligand contact to Mg(2+). Residue Cys122 participates in [2Fe-2S] cluster binding. Mg(2+) is bound by residues Asp123 and Lys124. Residue Lys124 is modified to N6-carboxylysine. Cys195 lines the [2Fe-2S] cluster pocket. Glu447 is a binding site for Mg(2+). Ser473 functions as the Proton acceptor in the catalytic mechanism.

The protein belongs to the IlvD/Edd family. Homodimer. Requires [2Fe-2S] cluster as cofactor. The cofactor is Mg(2+).

The catalysed reaction is (2R)-2,3-dihydroxy-3-methylbutanoate = 3-methyl-2-oxobutanoate + H2O. It carries out the reaction (2R,3R)-2,3-dihydroxy-3-methylpentanoate = (S)-3-methyl-2-oxopentanoate + H2O. It participates in amino-acid biosynthesis; L-isoleucine biosynthesis; L-isoleucine from 2-oxobutanoate: step 3/4. Its pathway is amino-acid biosynthesis; L-valine biosynthesis; L-valine from pyruvate: step 3/4. Functionally, functions in the biosynthesis of branched-chain amino acids. Catalyzes the dehydration of (2R,3R)-2,3-dihydroxy-3-methylpentanoate (2,3-dihydroxy-3-methylvalerate) into 2-oxo-3-methylpentanoate (2-oxo-3-methylvalerate) and of (2R)-2,3-dihydroxy-3-methylbutanoate (2,3-dihydroxyisovalerate) into 2-oxo-3-methylbutanoate (2-oxoisovalerate), the penultimate precursor to L-isoleucine and L-valine, respectively. The chain is Dihydroxy-acid dehydratase from Bacillus subtilis (strain 168).